The sequence spans 322 residues: MAASGEPQRQWQEEVAAVVVVGSCMTDLVSLTSRLPKTGETIHGHKFFIGFGGKGANQCVQAARLGAMTSMVCKVGKDSFGNDYIENLKQNDISTEFTYQTKDAATGTASIIVNNEGQNIIVIVAGANLLLNTEDLRAAANVISRAKVMVCQLEITPATSLEALTMARRSGVKTLFNPAPAIADLDPQFYTLSDVFCCNESEAEILTGLTVGSAADAGEAALVLLKRGCQVVIITLGAEGCVVLSQTEPEPKHIPTEKVKAVDTTGAGDSFVGALAFYLAYYPNLSLEDMLNRSNFIAAVSVQAAGTQSSYPYKKDLPLTLF.

Residues M25–D27, G53–N57, and E154 contribute to the substrate site. ATP contacts are provided by residues N199, T235–G240, and T256. D263 and T265 together coordinate K(+). Residues G268–D269 and N295 contribute to the ATP site. D269 is a binding site for substrate. The active-site Proton acceptor is the D269. Residues S301, A304, G306, and S310 each contribute to the K(+) site.

The protein belongs to the carbohydrate kinase PfkB family. Ribokinase subfamily. In terms of assembly, homodimer. Mg(2+) is required as a cofactor.

Its subcellular location is the cytoplasm. The protein localises to the nucleus. The catalysed reaction is D-ribose + ATP = D-ribose 5-phosphate + ADP + H(+). Its pathway is carbohydrate metabolism; D-ribose degradation; D-ribose 5-phosphate from beta-D-ribopyranose: step 2/2. Its activity is regulated as follows. Activated by a monovalent cation that binds near, but not in, the active site. The most likely occupant of the site in vivo is potassium. Ion binding induces a conformational change that may alter substrate affinity. Competitively inhibited by phosphonoacetic acid, etidronate, 2-carboxethylphosphonic acid, N-(phosphonomethyl)glycine, N-(phosphonomethyl)iminodiacetic acid and clodronate. Catalyzes the phosphorylation of ribose at O-5 in a reaction requiring ATP and magnesium. The resulting D-ribose-5-phosphate can then be used either for sythesis of nucleotides, histidine, and tryptophan, or as a component of the pentose phosphate pathway. The sequence is that of Ribokinase from Homo sapiens (Human).